The sequence spans 99 residues: Large ribosomal subunit protein uL23 (99 aa).

It belongs to the universal ribosomal protein uL23 family. In terms of assembly, part of the 50S ribosomal subunit. Contacts protein L29, and trigger factor when it is bound to the ribosome.

In terms of biological role, one of the early assembly proteins it binds 23S rRNA. One of the proteins that surrounds the polypeptide exit tunnel on the outside of the ribosome. Forms the main docking site for trigger factor binding to the ribosome. The sequence is that of Large ribosomal subunit protein uL23 from Francisella tularensis subsp. holarctica (strain OSU18).